A 413-amino-acid polypeptide reads, in one-letter code: Alpha-1-antitrypsin 1-5 (413 aa).

An N-terminal signal peptide occupies residues methionine 1–alanine 24. Residues asparagine 64, asparagine 101, and asparagine 265 are each glycosylated (N-linked (GlcNAc...) asparagine). Residues alanine 368–arginine 387 form an RCL region.

It belongs to the serpin family.

The protein localises to the secreted. In terms of biological role, does not inhibit elastase or chymotrypsin. No target protease has been identified to date. This Mus musculus (Mouse) protein is Alpha-1-antitrypsin 1-5 (Serpina1e).